We begin with the raw amino-acid sequence, 677 residues long: Pro-neuregulin-1, membrane-bound isoform (677 aa).

Residues 1-12 (MAEKKKVKEGKG) are compositionally biased toward basic and acidic residues. Disordered regions lie at residues 1–43 (MAEK…KEIK) and 78–106 (GAKN…ISKA). Residues 1–260 (MAEKKKVKEG…MEAEELYQKR (260 aa)) lie on the Extracellular side of the membrane. Over residues 13 to 24 (RKGKGKKDRKGK) the composition is skewed to basic residues. The Ig-like C2-type domain occupies 37–132 (PKLKEIKTQS…GNDTVTVNVT (96 aa)). Cysteines 57 and 116 form a disulfide. A compositionally biased stretch (basic and acidic residues) spans 78–91 (GAKNKPDSKPEHIK). 2 N-linked (GlcNAc...) asparagine glycosylation sites follow: Asn124 and Asn130. Residues 188–232 (HLIKCSDKEKTYCVNGGECYVLNGITSSNQFMCKCKPGFTGARCT) form the EGF-like domain. 3 disulfides stabilise this stretch: Cys192–Cys206, Cys200–Cys220, and Cys222–Cys231. The helical transmembrane segment at 261-280 (VLTITGICIDLLVVGDMCVV) threads the bilayer. Residues 281-677 (DAYCKTKKQR…RKMTCKTLFI (397 aa)) lie on the Cytoplasmic side of the membrane. Basic and acidic residues predominate over residues 294–315 (NDRLRQSLRERNKNITNKDNRP). 5 disordered regions span residues 294-326 (NDRL…PRKN), 350-375 (ETSF…PSHS), 397-418 (SVEN…GIGG), 457-479 (VEFK…ESSL), and 503-617 (PPRL…FLSI). Residues 351-375 (TSFSTSHYTSTTHHSTTVTQTPSHS) are compositionally biased toward low complexity. Over residues 397 to 407 (SVENSRHTSPT) the composition is skewed to polar residues. Residues 505-515 (RLREKRYDRKT) are compositionally biased toward basic and acidic residues. A compositionally biased stretch (basic residues) spans 568–578 (VNSRRQKRTKP). The span at 591–600 (DSSSESSTSE) shows a compositional bias: low complexity.

It belongs to the neuregulin family. Post-translationally, proteolytic cleavage close to the plasma membrane on the external face leads to the release of the soluble growth factor form. Extensive glycosylation precedes the proteolytic cleavage. In terms of tissue distribution, isoform alpha1 is expressed in brain and muscle. Isoform CRD is expressed in brain and spinal cord, but at very low level in muscle.

The protein resides in the cell membrane. It localises to the secreted. Its function is as follows. Direct ligand for the ERBB tyrosine kinase receptors. Induces expression of acetylcholine receptor in synaptic nuclei. In Xenopus laevis (African clawed frog), this protein is Pro-neuregulin-1, membrane-bound isoform (nrg1).